The primary structure comprises 94 residues: Small ribosomal subunit protein bS6 (94 aa).

It belongs to the bacterial ribosomal protein bS6 family.

Binds together with bS18 to 16S ribosomal RNA. The sequence is that of Small ribosomal subunit protein bS6 from Fusobacterium nucleatum subsp. nucleatum (strain ATCC 25586 / DSM 15643 / BCRC 10681 / CIP 101130 / JCM 8532 / KCTC 2640 / LMG 13131 / VPI 4355).